Here is a 274-residue protein sequence, read N- to C-terminus: THAP domain-containing protein 8 (274 aa).

The THAP-type zinc-finger motif lies at 1–85; sequence MPKYCRAPNC…LRPDAVPSIF (85 aa). Residues 83-121 form a disordered region; that stretch reads SIFSRGPPAKSQRRTRSTQKPVSPPPPLQKNTPLPQSPA.

The polypeptide is THAP domain-containing protein 8 (THAP8) (Homo sapiens (Human)).